The following is a 476-amino-acid chain: Glycogen synthase (476 aa).

Lys-15 lines the ADP-alpha-D-glucose pocket.

It belongs to the glycosyltransferase 1 family. Bacterial/plant glycogen synthase subfamily.

The enzyme catalyses [(1-&gt;4)-alpha-D-glucosyl](n) + ADP-alpha-D-glucose = [(1-&gt;4)-alpha-D-glucosyl](n+1) + ADP + H(+). Its pathway is glycan biosynthesis; glycogen biosynthesis. Synthesizes alpha-1,4-glucan chains using ADP-glucose. This chain is Glycogen synthase, found in Streptococcus mutans serotype c (strain ATCC 700610 / UA159).